A 264-amino-acid chain; its full sequence is Thiazole synthase (264 aa).

Catalysis depends on lysine 106, which acts as the Schiff-base intermediate with DXP. 1-deoxy-D-xylulose 5-phosphate contacts are provided by residues glycine 167, 193-194 (AG), and 215-216 (NT).

Belongs to the ThiG family. As to quaternary structure, homotetramer. Forms heterodimers with either ThiH or ThiS.

The protein localises to the cytoplasm. It carries out the reaction [ThiS sulfur-carrier protein]-C-terminal-Gly-aminoethanethioate + 2-iminoacetate + 1-deoxy-D-xylulose 5-phosphate = [ThiS sulfur-carrier protein]-C-terminal Gly-Gly + 2-[(2R,5Z)-2-carboxy-4-methylthiazol-5(2H)-ylidene]ethyl phosphate + 2 H2O + H(+). It functions in the pathway cofactor biosynthesis; thiamine diphosphate biosynthesis. Catalyzes the rearrangement of 1-deoxy-D-xylulose 5-phosphate (DXP) to produce the thiazole phosphate moiety of thiamine. Sulfur is provided by the thiocarboxylate moiety of the carrier protein ThiS. In vitro, sulfur can be provided by H(2)S. This chain is Thiazole synthase, found in Xanthomonas oryzae pv. oryzae (strain MAFF 311018).